The chain runs to 396 residues: Phosphoglycerate kinase (396 aa).

Residues 21–23 (DFN), Arg36, 59–62 (HLGK), Arg119, and Arg156 each bind substrate. Residues Lys206, Glu325, and 352–355 (GGDS) contribute to the ATP site.

The protein belongs to the phosphoglycerate kinase family. As to quaternary structure, monomer.

The protein resides in the cytoplasm. It catalyses the reaction (2R)-3-phosphoglycerate + ATP = (2R)-3-phospho-glyceroyl phosphate + ADP. Its pathway is carbohydrate degradation; glycolysis; pyruvate from D-glyceraldehyde 3-phosphate: step 2/5. The protein is Phosphoglycerate kinase of Macrococcus caseolyticus (strain JCSC5402) (Macrococcoides caseolyticum).